Consider the following 65-residue polypeptide: Large ribosomal subunit protein bL33 (65 aa).

The tract at residues 20 to 42 (APASEKRSPGVSRYTTEKNRRNT) is disordered.

This sequence belongs to the bacterial ribosomal protein bL33 family.

This Prochlorococcus marinus (strain SARG / CCMP1375 / SS120) protein is Large ribosomal subunit protein bL33.